The sequence spans 205 residues: MSKKKGLSAEEKRTRMMEIFYETKDVFQLKDMEKIAPKEKGITTMSVKEVLQSLVDDGMVDCERIGTSNYYWAFPSKALHARKRKLEVLDSQLSEGNQKYANLQKSIEKAKVGRHETEERTMLAKELSSLRDQREQLKAEVEKYRECDPQVVEEIRQANQVAKEAANRWTDNIFAIKSWAKRKFGFEENKIDKNFGIPEDFDYID.

An N-acetylserine modification is found at serine 2. Positions 83-173 (KRKLEVLDSQ…EAANRWTDNI (91 aa)) form a coiled coil.

The protein belongs to the MND1 family. Heterodimer with PSMC3IP/HOP2. MND1-PSMC3IP interacts with DMC1 and RAD51 and binds preferentially to dsDNA.

Its subcellular location is the nucleus. Its function is as follows. Required for proper homologous chromosome pairing and efficient cross-over and intragenic recombination during meiosis. Stimulates both DMC1- and RAD51-mediated homologous strand assimilation, which is required for the resolution of meiotic double-strand breaks. The chain is Meiotic nuclear division protein 1 homolog from Bos taurus (Bovine).